A 119-amino-acid chain; its full sequence is Large ribosomal subunit protein bL20 (119 aa).

It belongs to the bacterial ribosomal protein bL20 family.

Binds directly to 23S ribosomal RNA and is necessary for the in vitro assembly process of the 50S ribosomal subunit. It is not involved in the protein synthesizing functions of that subunit. This is Large ribosomal subunit protein bL20 from Heliobacterium modesticaldum (strain ATCC 51547 / Ice1).